Consider the following 460-residue polypeptide: MIDRQLLRKNPDAIRGALDEKGVTDVNLDQILTLDQEWRERKARGDELRHERNQISSKIGKLKAAGDEDAASEAIAQSQELKNELEEIEREADKLKSELDTAMLKIPQVPDDAVPVGTDESENVERRREGFDSLRSLPDTVIPHYDLGEELEILDFERGAKVTGGGFYFAKGDGARLEHALVQFMLDIHREQGYQDVFPPIPVNSQSMVGTGQFPKFTEDAYRIGETNDEPWDNDDLWLCPTAEVPVTNMYRDEILLDDDLPVKIQAYTPNFRREAGEHGTETRGIVRVHQFNKVELVNFVRPEDSAERFDGLLTEAEVVLQRLGLPYRILEMCTGDLGFTQRKKYDIEVWAPGDDMATGPDIGGRWLEVSSVSNFGAFQSRRAGLRYRPERHESASYLHTLNGSGVAVPRVMVAIMEYYQNDDGTITIPEPLQPYMNGLSVIEGHDPVGEAAVGAGKRE.

L-serine is bound at residue Thr242–Glu244. ATP contacts are provided by residues Arg273–Glu275 and Val289. Residue Glu296 coordinates L-serine. An ATP-binding site is contributed by Glu369 to Ser372. Ser405 is an L-serine binding site.

Belongs to the class-II aminoacyl-tRNA synthetase family. Type-1 seryl-tRNA synthetase subfamily. Homodimer. The tRNA molecule binds across the dimer.

Its subcellular location is the cytoplasm. It carries out the reaction tRNA(Ser) + L-serine + ATP = L-seryl-tRNA(Ser) + AMP + diphosphate + H(+). The enzyme catalyses tRNA(Sec) + L-serine + ATP = L-seryl-tRNA(Sec) + AMP + diphosphate + H(+). The protein operates within aminoacyl-tRNA biosynthesis; selenocysteinyl-tRNA(Sec) biosynthesis; L-seryl-tRNA(Sec) from L-serine and tRNA(Sec): step 1/1. Functionally, catalyzes the attachment of serine to tRNA(Ser). Is also able to aminoacylate tRNA(Sec) with serine, to form the misacylated tRNA L-seryl-tRNA(Sec), which will be further converted into selenocysteinyl-tRNA(Sec). The protein is Serine--tRNA ligase of Haloquadratum walsbyi (strain DSM 16790 / HBSQ001).